The primary structure comprises 155 residues: Large ribosomal subunit protein eL24 (155 aa).

Over residues 97-129 (KPEIRKAKRDEKAKADKEKKKADKAARKADKAK) the composition is skewed to basic and acidic residues. The tract at residues 97–155 (KPEIRKAKRDEKAKADKEKKKADKAARKADKAKSAATQASKISKQQAKGAFQKVAATSR) is disordered. Over residues 133 to 142 (TQASKISKQQ) the composition is skewed to polar residues.

Belongs to the eukaryotic ribosomal protein eL24 family.

The chain is Large ribosomal subunit protein eL24 (RPL24) from Eremothecium gossypii (strain ATCC 10895 / CBS 109.51 / FGSC 9923 / NRRL Y-1056) (Yeast).